The chain runs to 77 residues: Conotoxin Vc6.14 (77 aa).

An N-terminal signal peptide occupies residues 1–19 (MEKLTILLLVAAVLMSTQA). Positions 20–37 (MFQGGGEKRPKDKIKFLS) are excised as a propeptide. 3 disulfides stabilise this stretch: Cys-51–Cys-65, Cys-58–Cys-69, and Cys-64–Cys-74.

The protein belongs to the conotoxin O2 superfamily. As to expression, expressed by the venom duct.

Its subcellular location is the secreted. Inhibits voltage-gated ion channels. This chain is Conotoxin Vc6.14, found in Conus victoriae (Queen Victoria cone).